A 271-amino-acid chain; its full sequence is Energy-coupling factor transporter ATP-binding protein EcfA (271 aa).

An ABC transporter domain is found at 2 to 231 (ISIQNLTFYY…PLFLQQYKLT (230 aa)). An ATP-binding site is contributed by 34–41 (GHNGSGKS).

Belongs to the ABC transporter superfamily. Energy-coupling factor EcfA family. Forms a stable energy-coupling factor (ECF) transporter complex composed of 2 membrane-embedded substrate-binding proteins (S component), 2 ATP-binding proteins (A component) and 2 transmembrane proteins (T component).

It localises to the cell membrane. In terms of biological role, ATP-binding (A) component of a common energy-coupling factor (ECF) ABC-transporter complex. Unlike classic ABC transporters this ECF transporter provides the energy necessary to transport a number of different substrates. The protein is Energy-coupling factor transporter ATP-binding protein EcfA of Aster yellows witches'-broom phytoplasma (strain AYWB).